Here is a 350-residue protein sequence, read N- to C-terminus: Biotin synthase (350 aa).

The region spanning 54–278 (REIQLSTLLS…TMPQSYVRLS (225 aa)) is the Radical SAM core domain. The [4Fe-4S] cluster site is built by C69, C73, and C76. C113, C144, C204, and R276 together coordinate [2Fe-2S] cluster.

Belongs to the radical SAM superfamily. Biotin synthase family. In terms of assembly, homodimer. It depends on [4Fe-4S] cluster as a cofactor. The cofactor is [2Fe-2S] cluster.

It carries out the reaction (4R,5S)-dethiobiotin + (sulfur carrier)-SH + 2 reduced [2Fe-2S]-[ferredoxin] + 2 S-adenosyl-L-methionine = (sulfur carrier)-H + biotin + 2 5'-deoxyadenosine + 2 L-methionine + 2 oxidized [2Fe-2S]-[ferredoxin]. It participates in cofactor biosynthesis; biotin biosynthesis; biotin from 7,8-diaminononanoate: step 2/2. Its function is as follows. Catalyzes the conversion of dethiobiotin (DTB) to biotin by the insertion of a sulfur atom into dethiobiotin via a radical-based mechanism. The polypeptide is Biotin synthase (Neisseria meningitidis serogroup A / serotype 4A (strain DSM 15465 / Z2491)).